The sequence spans 150 residues: Transcriptional repressor NrdR (150 aa).

A zinc finger spans residues 3 to 34; sequence CPFCGYEDTFVIDTREIEDQRVIRRRRECPNC. Residues 49 to 139 enclose the ATP-cone domain; that stretch reads IMVIKKDGRR…VYQEFSSLEE (91 aa).

The protein belongs to the NrdR family. It depends on Zn(2+) as a cofactor.

Negatively regulates transcription of bacterial ribonucleotide reductase nrd genes and operons by binding to NrdR-boxes. The chain is Transcriptional repressor NrdR from Dictyoglomus thermophilum (strain ATCC 35947 / DSM 3960 / H-6-12).